Consider the following 143-residue polypeptide: Small ribosomal subunit protein uS12 (143 aa).

Proline 62 carries the hydroxyproline modification.

It belongs to the universal ribosomal protein uS12 family. As to quaternary structure, component of the 40S small ribosomal subunit.

It localises to the cytoplasm. Its subcellular location is the cytosol. The protein resides in the rough endoplasmic reticulum. The protein is Small ribosomal subunit protein uS12 (RPS23) of Ciona intestinalis (Transparent sea squirt).